A 316-amino-acid polypeptide reads, in one-letter code: MTMYAKNNTSGKDMLSLLEWNKEELTDIIKLAVAMKTNPAHYSHILSGKILGMIFDKPSTRTRVSFEAGILQLGGQAIVMSSKELQIGRGEPIKDTAHVMSEYIDAIMIRTFSHEKVEELAYHAEIPIINGLTDLHHPCQALADLMTIYEWKDQLEGIKLAYIGDGNNVCHSLLLAGAMVGIDIRLAMPKGYEVDETILAKAENLAKQSGGKIFVTEDSKLAVTDADFIYTDVWTSMGQEDENAKRLADFGEKYQVNAELVSGAKPDYHFLHCLPAHREEEVTTEIIDGIHSVIYQQAGNRLHAQKALLAAILEAK.

Residues 59-62 (STRT), Gln-86, Arg-110, and 137-140 (HPCQ) each bind carbamoyl phosphate. Residues Asn-168, Asp-232, and 236–237 (SM) contribute to the L-ornithine site. Carbamoyl phosphate is bound by residues 273–274 (CL) and Arg-301.

This sequence belongs to the aspartate/ornithine carbamoyltransferase superfamily. OTCase family.

It is found in the cytoplasm. The enzyme catalyses carbamoyl phosphate + L-ornithine = L-citrulline + phosphate + H(+). It functions in the pathway amino-acid biosynthesis; L-arginine biosynthesis; L-arginine from L-ornithine and carbamoyl phosphate: step 1/3. In terms of biological role, reversibly catalyzes the transfer of the carbamoyl group from carbamoyl phosphate (CP) to the N(epsilon) atom of ornithine (ORN) to produce L-citrulline. In Listeria monocytogenes serovar 1/2a (strain ATCC BAA-679 / EGD-e), this protein is Ornithine carbamoyltransferase (argF).